A 617-amino-acid polypeptide reads, in one-letter code: Threonine--tRNA ligase (617 aa).

Residues 209-502 (DHRRLGKDLD…MTENYAGDFP (294 aa)) are catalytic. Zn(2+) contacts are provided by cysteine 302, histidine 353, and histidine 479.

It belongs to the class-II aminoacyl-tRNA synthetase family. As to quaternary structure, homodimer. Zn(2+) is required as a cofactor.

The protein localises to the cytoplasm. The catalysed reaction is tRNA(Thr) + L-threonine + ATP = L-threonyl-tRNA(Thr) + AMP + diphosphate + H(+). Functionally, catalyzes the attachment of threonine to tRNA(Thr) in a two-step reaction: L-threonine is first activated by ATP to form Thr-AMP and then transferred to the acceptor end of tRNA(Thr). Also edits incorrectly charged L-seryl-tRNA(Thr). This Synechococcus sp. (strain CC9311) protein is Threonine--tRNA ligase.